We begin with the raw amino-acid sequence, 153 residues long: Sec-independent protein translocase protein TatB (153 aa).

A helical transmembrane segment spans residues 1-21 (MFGISFSELLLVGLVALLVLG). The tract at residues 78–153 (MFAQNQHPET…HDSSLPPRAP (76 aa)) is disordered.

It belongs to the TatB family. As to quaternary structure, the Tat system comprises two distinct complexes: a TatABC complex, containing multiple copies of TatA, TatB and TatC subunits, and a separate TatA complex, containing only TatA subunits. Substrates initially bind to the TatABC complex, which probably triggers association of the separate TatA complex to form the active translocon.

It is found in the cell inner membrane. Part of the twin-arginine translocation (Tat) system that transports large folded proteins containing a characteristic twin-arginine motif in their signal peptide across membranes. Together with TatC, TatB is part of a receptor directly interacting with Tat signal peptides. TatB may form an oligomeric binding site that transiently accommodates folded Tat precursor proteins before their translocation. The sequence is that of Sec-independent protein translocase protein TatB from Pseudomonas savastanoi pv. phaseolicola (strain 1448A / Race 6) (Pseudomonas syringae pv. phaseolicola (strain 1448A / Race 6)).